The sequence spans 195 residues: HTH-type transcriptional regulator BetI (195 aa).

Residues 8–68 enclose the HTH tetR-type domain; sequence SIRRRQLIDA…ATMRDITSQL (61 aa). A DNA-binding region (H-T-H motif) is located at residues 31–50; that stretch reads TIAQIARRAGVSTGIISHYF.

Its pathway is amine and polyamine biosynthesis; betaine biosynthesis via choline pathway [regulation]. Functionally, repressor involved in the biosynthesis of the osmoprotectant glycine betaine. It represses transcription of the choline transporter BetT and the genes of BetAB involved in the synthesis of glycine betaine. The sequence is that of HTH-type transcriptional regulator BetI from Escherichia coli O17:K52:H18 (strain UMN026 / ExPEC).